A 125-amino-acid polypeptide reads, in one-letter code: Small ribosomal subunit protein uS13 (125 aa).

A disordered region spans residues 92–125; sequence RRSLPARGQNTQTNARTRKGRRKTVAGKKKAVKK. The span at 107 to 125 shows a compositional bias: basic residues; sequence RTRKGRRKTVAGKKKAVKK.

It belongs to the universal ribosomal protein uS13 family. As to quaternary structure, part of the 30S ribosomal subunit. Forms a loose heterodimer with protein S19. Forms two bridges to the 50S subunit in the 70S ribosome.

Located at the top of the head of the 30S subunit, it contacts several helices of the 16S rRNA. In the 70S ribosome it contacts the 23S rRNA (bridge B1a) and protein L5 of the 50S subunit (bridge B1b), connecting the 2 subunits; these bridges are implicated in subunit movement. Contacts the tRNAs in the A and P-sites. The protein is Small ribosomal subunit protein uS13 of Chlorobium phaeobacteroides (strain BS1).